The sequence spans 253 residues: Short-chain dehydrogenase/reductase ATR9 (253 aa).

Residues serine 15, serine 16, isoleucine 18, serine 38, asparagine 39, arginine 42, aspartate 65, and lysine 129 each coordinate NADP(+). The active-site Proton donor is the serine 147. Threonine 194 serves as a coordination point for NADP(+).

It belongs to the short-chain dehydrogenases/reductases (SDR) family.

It functions in the pathway mycotoxin biosynthesis. Short-chain dehydrogenase/reductase; part of the core atranone cluster (CAC) which products are predicted to catalyze most or all steps of mycotoxin atranone synthesis, starting from geranylgeranyl pyrophosphate (GGPP). The initial cyclization of GGPP to dolabellane is probably performed by the terpene cyclase ATR13. The Baeyer-Villiger oxidation near the end of the atranone synthesis, which converts atranones D and E to atranones F and G is predicted to be catalyzed by the monooxygenase ATR8. Of the CAC's other predicted gene products, the reducing PKS ATR6 might synthesize a polyketide chain. This polyketide is probably transferred onto the atranone backbone by the polyketide transferase ATR5. Other predicted CAC products include 4 oxygenases (ATR2, ATR3, ATR4, and ATR14), 3 short-chain reductases (ATR7, ATR9, and ATR10), and a methyltransferase (ATR12). These may all be involved in the various steps of atranone biosynthesis, although their specific roles must await experimental determination. In Stachybotrys chlorohalonatus (strain IBT 40285), this protein is Short-chain dehydrogenase/reductase ATR9.